Here is a 711-residue protein sequence, read N- to C-terminus: Zinc finger CCCH domain-containing protein 32 (711 aa).

Residues 1–21 (MEADGAAAAAAAGEASTEAGA) are compositionally biased toward low complexity. The segment at 1 to 23 (MEADGAAAAAAAGEASTEAGARP) is disordered. C3H1-type zinc fingers lie at residues 31–60 (LRRN…HSDN), 62–88 (RMNP…HPPI), and 112–139 (GKQL…HGPQ). Disordered stretches follow at residues 221-246 (KSEK…GDHP), 339-376 (RFNG…HSER), 405-561 (SSLA…EGPK), and 573-701 (AAWA…DDDD). Basic and acidic residues-rich tracts occupy residues 364 to 376 (SERS…HSER) and 413 to 427 (RNGE…YRER). Over residues 428-437 (AHGHRSHRDH) the composition is skewed to basic residues. 2 stretches are compositionally biased toward basic and acidic residues: residues 460–509 (SPDR…RRSS) and 585–594 (KQDKSAEVSH). 2 stretches are compositionally biased toward acidic residues: residues 648-663 (EDII…DADN) and 686-701 (ENAY…DDDD).

This chain is Zinc finger CCCH domain-containing protein 32, found in Oryza sativa subsp. japonica (Rice).